The chain runs to 336 residues: MYYPFVRKALFQLDPERAHEVTFQQLRRVTGTPLEMLVRQKVPARPVTCMGLTFKNPLGLAAGLDKNGECIDALGAMGFGSIEIGTVTPRPQPGNDKPRIFRLVDAEGLINRMGFNNHGVDNLVENVKKAHFDGVLGINIGKNKDTPVEHGKDDYLICMEKVYPYAGYIAINISSPNTPGLRTLQYGEALDDLLSGIKNKQLELQQKHQKYVPVAIKIAPDLLPEELIQVADSLVRHNIDGVIATNTTLDRSLVQGMKHCDETGGLSGRPLQLKSTEIIRMLSAELNGRLPIIGVGGIDSVIAAREKIAAGASLVQIYSGFIFKGPPLIKEIVTHI.

Residues 62–66 and Thr-86 each bind FMN; that span reads AGLDK. Lys-66 contributes to the substrate binding site. 111-115 is a binding site for substrate; the sequence is NRMGF. 2 residues coordinate FMN: Asn-139 and Asn-172. Asn-172 provides a ligand contact to substrate. The active-site Nucleophile is the Ser-175. Asn-177 contributes to the substrate binding site. FMN-binding residues include Lys-217 and Thr-245. Residue 246–247 participates in substrate binding; that stretch reads NT. FMN-binding positions include Gly-268, Gly-297, and 318–319; that span reads YS.

It belongs to the dihydroorotate dehydrogenase family. Type 2 subfamily. As to quaternary structure, monomer. It depends on FMN as a cofactor.

Its subcellular location is the cell membrane. It carries out the reaction (S)-dihydroorotate + a quinone = orotate + a quinol. It participates in pyrimidine metabolism; UMP biosynthesis via de novo pathway; orotate from (S)-dihydroorotate (quinone route): step 1/1. In terms of biological role, catalyzes the conversion of dihydroorotate to orotate with quinone as electron acceptor. The chain is Dihydroorotate dehydrogenase (quinone) from Klebsiella pneumoniae subsp. pneumoniae (strain ATCC 700721 / MGH 78578).